The primary structure comprises 218 residues: Ribose-5-phosphate isomerase A (218 aa).

Substrate contacts are provided by residues 28-31 (TGST), 81-84 (DGAD), and 94-97 (KGGG). The Proton acceptor role is filled by Glu103. Lys121 contributes to the substrate binding site.

The protein belongs to the ribose 5-phosphate isomerase family. Homodimer.

It carries out the reaction aldehydo-D-ribose 5-phosphate = D-ribulose 5-phosphate. The protein operates within carbohydrate degradation; pentose phosphate pathway; D-ribose 5-phosphate from D-ribulose 5-phosphate (non-oxidative stage): step 1/1. Catalyzes the reversible conversion of ribose-5-phosphate to ribulose 5-phosphate. The protein is Ribose-5-phosphate isomerase A of Shewanella sediminis (strain HAW-EB3).